A 200-amino-acid polypeptide reads, in one-letter code: Small ribosomal subunit protein uS5 (200 aa).

A compositionally biased stretch (basic and acidic residues) spans 1–22 (MAEERGEKRGRRRDRENPRDRD). Positions 1–26 (MAEERGEKRGRRRDRENPRDRDDESS) are disordered. The S5 DRBM domain maps to 28 to 91 (LVDKLVGINR…EEAKRNLVRI (64 aa)).

This sequence belongs to the universal ribosomal protein uS5 family. In terms of assembly, part of the 30S ribosomal subunit. Contacts proteins S4 and S8.

Its function is as follows. With S4 and S12 plays an important role in translational accuracy. Functionally, located at the back of the 30S subunit body where it stabilizes the conformation of the head with respect to the body. The sequence is that of Small ribosomal subunit protein uS5 from Hyphomonas neptunium (strain ATCC 15444).